We begin with the raw amino-acid sequence, 615 residues long: Sterol 3-beta-glucosyltransferase UGT80B1 (615 aa).

The tract at residues 1-54 is disordered; sequence MASNVFDHPLQELEGEDNGVKSEKASLLETSGSVDTTPEDSGHRSSDGHRGLDH. Residues 40-54 show a composition bias toward basic and acidic residues; it reads DSGHRSSDGHRGLDH.

It belongs to the glycosyltransferase 28 family. Expressed in developing seeds, seedlings, leaves and around the apical tip of cotyledons. In embryo, expressed in the seed coat and cotyledons.

It catalyses the reaction a sterol + UDP-alpha-D-glucose = a sterol 3-beta-D-glucoside + UDP + H(+). Involved in the biosynthesis of sterol glucosides. Catalyzes the synthesis of steryl glycosides (SGs) and acyl steryl glycosides (ASGs) which are the most abundant sterol derivatives in higher plants. Can act on several sterols like sitosterol, campesterol and stigmasterol. Is required for embryonic development, seed suberin accumulation, cutin formation and flavanoid accumulation in the seed coat. Both UGT80A2 and UGT80B1 are required for the normal production of SGs and ASGs in seeds. The polypeptide is Sterol 3-beta-glucosyltransferase UGT80B1 (Arabidopsis thaliana (Mouse-ear cress)).